The primary structure comprises 618 residues: F-box/LRR-repeat protein At3g58940 (618 aa).

The 47-residue stretch at 1–47 (MDRVSNLPEEVRCHILSFLPTKHAALTSVLSKSWLNLWKFETNLDID) folds into the F-box domain. 6 LRR repeats span residues 147–176 (LKLR…NIDS), 196–223 (EVHM…SIHG), 224–249 (TGVE…NYSD), 282–313 (TLYL…GLKS), 314–339 (DEGR…IIEG), and 354–379 (CISR…GFRG). The interval 587-618 (ATDSERAETSSNQEMTELGQATATYFPPREGE) is disordered. The span at 595 to 609 (TSSNQEMTELGQATA) shows a compositional bias: polar residues.

This chain is F-box/LRR-repeat protein At3g58940, found in Arabidopsis thaliana (Mouse-ear cress).